The sequence spans 181 residues: Caveolin-1 (181 aa).

Residues 1 to 107 lie on the Cytoplasmic side of the membrane; that stretch reads MTGGLRDGEK…TKYWCYRLLT (107 aa). Positions 108–128 form an intramembrane region, helical; the sequence is ALVGIPLALIWGIFFAILSFI. The Cytoplasmic portion of the chain corresponds to 129–181; that stretch reads HIWAVVPCVKSYLIEIHCISRVYSICVHTFCDPLFEAMGKCLGGVRIRTSKEV. S-palmitoyl cysteine attachment occurs at residues Cys136, Cys146, and Cys159.

This sequence belongs to the caveolin family. As to quaternary structure, homooligomer.

The protein resides in the golgi apparatus membrane. It localises to the cell membrane. Its subcellular location is the membrane. It is found in the caveola. The protein localises to the membrane raft. May act as a positive regulator of T-cell coactivation. May act as a scaffolding protein within caveolar membranes. Interacts directly with G-protein alpha subunits and can functionally regulate their activity. The protein is Caveolin-1 (cav1) of Takifugu rubripes (Japanese pufferfish).